Reading from the N-terminus, the 434-residue chain is Enolase (434 aa).

Gln-166 provides a ligand contact to (2R)-2-phosphoglycerate. Glu-208 serves as the catalytic Proton donor. Mg(2+) contacts are provided by Asp-245, Glu-290, and Asp-317. Residues Lys-342, Arg-371, Ser-372, and Lys-393 each contribute to the (2R)-2-phosphoglycerate site. Lys-342 (proton acceptor) is an active-site residue.

Belongs to the enolase family. Mg(2+) is required as a cofactor.

The protein localises to the cytoplasm. It is found in the secreted. The protein resides in the cell surface. The catalysed reaction is (2R)-2-phosphoglycerate = phosphoenolpyruvate + H2O. Its pathway is carbohydrate degradation; glycolysis; pyruvate from D-glyceraldehyde 3-phosphate: step 4/5. Its function is as follows. Catalyzes the reversible conversion of 2-phosphoglycerate (2-PG) into phosphoenolpyruvate (PEP). It is essential for the degradation of carbohydrates via glycolysis. The protein is Enolase of Caldicellulosiruptor saccharolyticus (strain ATCC 43494 / DSM 8903 / Tp8T 6331).